A 609-amino-acid chain; its full sequence is UvrABC system protein C (609 aa).

The GIY-YIG domain occupies 16–94; it reads SSAGVYRMYD…IKQYMPKYNV (79 aa). One can recognise a UVR domain in the interval 203-238; that stretch reads QQVISALVDKMELAAERQAYEQAARFRDQIMALRKV.

This sequence belongs to the UvrC family. As to quaternary structure, interacts with UvrB in an incision complex.

Its subcellular location is the cytoplasm. Functionally, the UvrABC repair system catalyzes the recognition and processing of DNA lesions. UvrC both incises the 5' and 3' sides of the lesion. The N-terminal half is responsible for the 3' incision and the C-terminal half is responsible for the 5' incision. The polypeptide is UvrABC system protein C (Shewanella baltica (strain OS155 / ATCC BAA-1091)).